We begin with the raw amino-acid sequence, 359 residues long: Src kinase-associated phosphoprotein 1 (359 aa).

A PH domain is found at 107 to 210; sequence NVIKQGYLEK…WVDQISFLLK (104 aa). 3 positions are modified to phosphotyrosine: Tyr-142, Tyr-219, and Tyr-232. Residues 219–237 show a composition bias toward acidic residues; sequence YEEDEEEEEKEETYDDIDG. Positions 219–239 are disordered; sequence YEEDEEEEEKEETYDDIDGFD. Residues Tyr-271 and Tyr-295 each carry the phosphotyrosine; by FYN modification. The interval 290–295 is interaction with FYB1; sequence RKGVDY. The 62-residue stretch at 294-355 folds into the SH3 domain; it reads DYASYYQGLW…PKEYLTTAFE (62 aa).

It belongs to the SKAP family. Homodimer. Interacts with FYN. Interacts with PTPRC. Interacts with GRB2 when phosphorylated on Tyr-271. Interacts with FYB1, which is required for SKAP2 protein stability. Part of a complex consisting of SKAP1, FYB1 and CLNK. Interacts with RASGRP1. Interacts with FYB2. Post-translationally, phosphorylated on tyrosines. Phosphorylation by FYN on Tyr-271 is required for GRB2 interaction. Phosphorylation by FYN on Tyr-295 abolishes interaction with FYB1. Tyr-232 is dephosphorylated by PTPRC. As to expression, highly expressed in thymocytes and peripheral blood lymphocytes. Also expressed in spleen cells and testis. Present in T-cells (at protein level).

Its subcellular location is the cytoplasm. It localises to the nucleus. The protein resides in the cell membrane. Its function is as follows. Positively regulates T-cell receptor signaling by enhancing the MAP kinase pathway. Required for optimal conjugation between T-cells and antigen-presenting cells by promoting the clustering of integrin ITGAL on the surface of T-cells. May be involved in high affinity immunoglobulin epsilon receptor signaling in mast cells. This chain is Src kinase-associated phosphoprotein 1 (SKAP1), found in Homo sapiens (Human).